We begin with the raw amino-acid sequence, 476 residues long: Trigger factor (476 aa).

In terms of domain architecture, PPIase FKBP-type spans 169 to 254 (GDKVTLDYVG…VKEVAAAEEL (86 aa)). The segment at 437–476 (SRDELLAEDEAEGEEKKAAGETKKKAAPKKKAAKKESAAE) is disordered. Basic and acidic residues predominate over residues 450–460 (EEKKAAGETKK).

It belongs to the FKBP-type PPIase family. Tig subfamily.

The protein localises to the cytoplasm. It catalyses the reaction [protein]-peptidylproline (omega=180) = [protein]-peptidylproline (omega=0). Functionally, involved in protein export. Acts as a chaperone by maintaining the newly synthesized protein in an open conformation. Functions as a peptidyl-prolyl cis-trans isomerase. This is Trigger factor from Chelativorans sp. (strain BNC1).